We begin with the raw amino-acid sequence, 329 residues long: D-alanine--D-alanine ligase (329 aa).

The region spanning lysine 121–threonine 327 is the ATP-grasp domain. Alanine 151 to glutamate 206 lines the ATP pocket. Positions 281, 294, and 296 each coordinate Mg(2+).

The protein belongs to the D-alanine--D-alanine ligase family. Requires Mg(2+) as cofactor. Mn(2+) serves as cofactor.

Its subcellular location is the cytoplasm. It catalyses the reaction 2 D-alanine + ATP = D-alanyl-D-alanine + ADP + phosphate + H(+). It functions in the pathway cell wall biogenesis; peptidoglycan biosynthesis. Its function is as follows. Cell wall formation. This is D-alanine--D-alanine ligase from Vibrio cholerae serotype O1 (strain ATCC 39541 / Classical Ogawa 395 / O395).